The primary structure comprises 304 residues: MADKLIRATAADGGIRVVGVITTRLTEEARQRHKLSNVATAALGRTMASALLLASSLKKPGSRVNIRIKGDGPLGGVLVDAGLDGTVRGYVDYPQVELLPNAQGKLDVGRAVGDKGYVRVLREEKGEGRNELQESIVEIVSGEVGEDIAYYLDQSEQIPSALQVGVFVGTTTGVTAAGGILLQVLSKEASRDEVLVARLESRLRKLTGFTPLLRAGKGLEDIFQELLGDMGLEIFPAVQMLRFDCDCSFERALGALKFLGVDELKDIIEKDKQAEAICEFCREVYNANERQLIELVESLQAESC.

Intrachain disulfides connect Cys-245–Cys-247 and Cys-278–Cys-281.

Belongs to the HSP33 family. Under oxidizing conditions two disulfide bonds are formed involving the reactive cysteines. Under reducing conditions zinc is bound to the reactive cysteines and the protein is inactive.

It is found in the cytoplasm. Functionally, redox regulated molecular chaperone. Protects both thermally unfolding and oxidatively damaged proteins from irreversible aggregation. Plays an important role in the bacterial defense system toward oxidative stress. This Microcystis aeruginosa (strain NIES-843 / IAM M-2473) protein is 33 kDa chaperonin.